The chain runs to 488 residues: UDP-N-acetylmuramate--L-alanine ligase (488 aa).

Residue 126 to 132 coordinates ATP; it reads GTHGKTT.

Belongs to the MurCDEF family.

It is found in the cytoplasm. The enzyme catalyses UDP-N-acetyl-alpha-D-muramate + L-alanine + ATP = UDP-N-acetyl-alpha-D-muramoyl-L-alanine + ADP + phosphate + H(+). The protein operates within cell wall biogenesis; peptidoglycan biosynthesis. Functionally, cell wall formation. This Cronobacter sakazakii (strain ATCC BAA-894) (Enterobacter sakazakii) protein is UDP-N-acetylmuramate--L-alanine ligase.